The following is a 332-amino-acid chain: Beta-chimaerin (332 aa).

Residues 78–128 (THNFKVHTFRGPHWCEYCANFMWGLIAQGVRCSDCGLNVHKQCSKHVPNDC) form a Phorbol-ester/DAG-type zinc finger. Residues 141–332 (CDLTTLVKAH…ILIENEDVLF (192 aa)) form the Rho-GAP domain.

It localises to the membrane. Its activity is regulated as follows. In the inactive state, the N terminus protrudes into the active site of the Rho-GAP domain, sterically blocking Rac binding. Phospholipid binding to the Phorbol-ester/DAG-type zinc-finger/C1 domain triggers the cooperative dissociation of these interactions, allowing the N-terminus to move out of the active site and thereby activating the enzyme. Functionally, GTPase-activating protein for p21-rac. The sequence is that of Beta-chimaerin (Chn2) from Mus musculus (Mouse).